The primary structure comprises 93 residues: Ribonuclease P protein component 4 (93 aa).

Zn(2+) is bound by residues Cys55, Cys58, Cys81, and Cys83.

Belongs to the eukaryotic/archaeal RNase P protein component 4 family. In terms of assembly, consists of a catalytic RNA component and at least 4-5 protein subunits. Zn(2+) is required as a cofactor.

The protein resides in the cytoplasm. The enzyme catalyses Endonucleolytic cleavage of RNA, removing 5'-extranucleotides from tRNA precursor.. Part of ribonuclease P, a protein complex that generates mature tRNA molecules by cleaving their 5'-ends. The protein is Ribonuclease P protein component 4 of Halobacterium salinarum (strain ATCC 29341 / DSM 671 / R1).